A 98-amino-acid polypeptide reads, in one-letter code: MSMVYINIFLAFTLSFMGLLIYRSHLMSSLLCLEGMMLSLFVMMTITILINHLTLASMTPIILLVFAACEAALGLSLLVMISTTYGTDYVQNLNLLQC.

3 helical membrane passes run Met1–Ile21, Leu30–Ile50, and Ile61–Ile81.

This sequence belongs to the complex I subunit 4L family. As to quaternary structure, core subunit of respiratory chain NADH dehydrogenase (Complex I) which is composed of 45 different subunits.

The protein localises to the mitochondrion inner membrane. It catalyses the reaction a ubiquinone + NADH + 5 H(+)(in) = a ubiquinol + NAD(+) + 4 H(+)(out). Its function is as follows. Core subunit of the mitochondrial membrane respiratory chain NADH dehydrogenase (Complex I) which catalyzes electron transfer from NADH through the respiratory chain, using ubiquinone as an electron acceptor. Part of the enzyme membrane arm which is embedded in the lipid bilayer and involved in proton translocation. The polypeptide is NADH-ubiquinone oxidoreductase chain 4L (MT-ND4L) (Neovison vison (American mink)).